Consider the following 1487-residue polypeptide: Chromosome partition protein MukB (1487 aa).

ATP is bound at residue 34–41 (GGNGAGKS). 6 coiled-coil regions span residues 297-458 (GSRE…TNAL), 506-601 (RESQ…LEAI), 637-666 (LEQE…RLAS), 781-806 (RAAR…AKAA), 836-1109 (EQAL…ELRT), and 1210-1266 (VEAI…LSNI). The tract at residues 667-784 (PGGSNDPRLK…EIPLFGRAAR (118 aa)) is flexible hinge.

Belongs to the SMC family. MukB subfamily. As to quaternary structure, homodimerization via its hinge domain. Binds to DNA via its C-terminal region. Interacts, and probably forms a ternary complex, with MukE and MukF via its C-terminal region. The complex formation is stimulated by calcium or magnesium. Interacts with tubulin-related protein FtsZ.

It is found in the cytoplasm. The protein resides in the nucleoid. In terms of biological role, plays a central role in chromosome condensation, segregation and cell cycle progression. Functions as a homodimer, which is essential for chromosome partition. Involved in negative DNA supercoiling in vivo, and by this means organize and compact chromosomes. May achieve or facilitate chromosome segregation by condensation DNA from both sides of a centrally located replisome during cell division. This Vibrio parahaemolyticus serotype O3:K6 (strain RIMD 2210633) protein is Chromosome partition protein MukB.